We begin with the raw amino-acid sequence, 599 residues long: Elongation factor 4 (599 aa).

Positions 2 to 184 (NHIRNFSIIA…RLVRDIPAPE (183 aa)) constitute a tr-type G domain. Residues 14 to 19 (DHGKST) and 131 to 134 (NKID) each bind GTP.

Belongs to the TRAFAC class translation factor GTPase superfamily. Classic translation factor GTPase family. LepA subfamily.

It localises to the cell inner membrane. The enzyme catalyses GTP + H2O = GDP + phosphate + H(+). Its function is as follows. Required for accurate and efficient protein synthesis under certain stress conditions. May act as a fidelity factor of the translation reaction, by catalyzing a one-codon backward translocation of tRNAs on improperly translocated ribosomes. Back-translocation proceeds from a post-translocation (POST) complex to a pre-translocation (PRE) complex, thus giving elongation factor G a second chance to translocate the tRNAs correctly. Binds to ribosomes in a GTP-dependent manner. In Yersinia pestis (strain Pestoides F), this protein is Elongation factor 4.